The following is a 181-amino-acid chain: Photosystem I assembly protein Ycf4 (181 aa).

2 helical membrane passes run tyrosine 19–serine 39 and valine 62–isoleucine 82.

This sequence belongs to the Ycf4 family.

It localises to the plastid. The protein resides in the chloroplast thylakoid membrane. In terms of biological role, seems to be required for the assembly of the photosystem I complex. The polypeptide is Photosystem I assembly protein Ycf4 (Phaeodactylum tricornutum (strain CCAP 1055/1)).